Consider the following 201-residue polypeptide: Large ribosomal subunit protein bL25 (201 aa).

It belongs to the bacterial ribosomal protein bL25 family. CTC subfamily. As to quaternary structure, part of the 50S ribosomal subunit; part of the 5S rRNA/L5/L18/L25 subcomplex. Contacts the 5S rRNA. Binds to the 5S rRNA independently of L5 and L18.

In terms of biological role, this is one of the proteins that binds to the 5S RNA in the ribosome where it forms part of the central protuberance. This is Large ribosomal subunit protein bL25 from Aromatoleum aromaticum (strain DSM 19018 / LMG 30748 / EbN1) (Azoarcus sp. (strain EbN1)).